The chain runs to 365 residues: Phosphopantothenate--cysteine ligase CAB2 (365 aa).

Positions 228-250 are disordered; that stretch reads QSGDNGKMGANNDTEGTTRTTPD. Residues 238–248 show a composition bias toward polar residues; it reads NNDTEGTTRTT.

It belongs to the PPC synthetase family. In terms of assembly, homodimer.

The protein resides in the cytoplasm. It is found in the nucleus. It carries out the reaction (R)-4'-phosphopantothenate + L-cysteine + CTP = N-[(R)-4-phosphopantothenoyl]-L-cysteine + CMP + diphosphate + H(+). Its pathway is cofactor biosynthesis; coenzyme A biosynthesis; CoA from (R)-pantothenate: step 2/5. Catalyzes the first step in the biosynthesis of coenzyme A from vitamin B5, where cysteine is conjugated to 4'-phosphopantothenate to form 4-phosphopantothenoylcysteine. The protein is Phosphopantothenate--cysteine ligase CAB2 (CAB2) of Saccharomyces cerevisiae (strain ATCC 204508 / S288c) (Baker's yeast).